Reading from the N-terminus, the 179-residue chain is Large ribosomal subunit protein uL6 (179 aa).

Belongs to the universal ribosomal protein uL6 family. Part of the 50S ribosomal subunit.

This protein binds to the 23S rRNA, and is important in its secondary structure. It is located near the subunit interface in the base of the L7/L12 stalk, and near the tRNA binding site of the peptidyltransferase center. This Pseudomonas savastanoi pv. phaseolicola (strain 1448A / Race 6) (Pseudomonas syringae pv. phaseolicola (strain 1448A / Race 6)) protein is Large ribosomal subunit protein uL6.